We begin with the raw amino-acid sequence, 298 residues long: Protein RKD2 (298 aa).

Composition is skewed to basic and acidic residues over residues M1–K10 and E81–T102. 2 disordered regions span residues M1–D22 and S73–H112. One can recognise an RWP-RK domain in the interval S121 to K203. A coiled-coil region spans residues N188 to P222. The tract at residues N241–S279 is disordered. The span at S252 to D269 shows a compositional bias: low complexity. Over residues E270–S279 the composition is skewed to acidic residues.

The protein resides in the nucleus. In terms of biological role, putative transcription factor. The chain is Protein RKD2 (RKD2) from Arabidopsis thaliana (Mouse-ear cress).